Consider the following 593-residue polypeptide: Probable ubiquitin carboxyl-terminal hydrolase 4 (593 aa).

In terms of domain architecture, USP spans 227 to 573 (IGLTNLGNTC…SSYILFYKRS (347 aa)). Cys-236 acts as the Nucleophile in catalysis. Ser-338 and Ser-343 each carry phosphoserine. His-530 functions as the Proton acceptor in the catalytic mechanism.

Belongs to the peptidase C19 family. As to quaternary structure, interacts with sfp47.

The protein localises to the cytoplasm. The protein resides in the endosome. It carries out the reaction Thiol-dependent hydrolysis of ester, thioester, amide, peptide and isopeptide bonds formed by the C-terminal Gly of ubiquitin (a 76-residue protein attached to proteins as an intracellular targeting signal).. Has an ATP-independent isopeptidase activity, cleaving at the C-terminus of the ubiquitin moiety. Acts late in the proteolytic pathway in conjunction with the 26S proteasome. Plays a role in avoiding DNA overreplication. This chain is Probable ubiquitin carboxyl-terminal hydrolase 4 (ubp4), found in Schizosaccharomyces pombe (strain 972 / ATCC 24843) (Fission yeast).